The following is a 359-amino-acid chain: Protein mab-21-like 2-B (359 aa).

Belongs to the mab-21 family.

Its subcellular location is the nucleus. The protein resides in the cytoplasm. In terms of biological role, required for several aspects of embryonic development including normal development of the eye. In Xenopus laevis (African clawed frog), this protein is Protein mab-21-like 2-B (mab21l2-b).